Here is a 256-residue protein sequence, read N- to C-terminus: Hemin import ATP-binding protein HmuV (256 aa).

Residues 2–238 enclose the ABC transporter domain; the sequence is ISAQNLVYSL…QELTMLYGAD (237 aa). 34 to 41 provides a ligand contact to ATP; the sequence is GPNGAGKS.

Belongs to the ABC transporter superfamily. Heme (hemin) importer (TC 3.A.1.14.5) family. In terms of assembly, the complex is composed of two ATP-binding proteins (HmuV), two transmembrane proteins (HmuU) and a solute-binding protein (HmuT).

The protein localises to the cell inner membrane. Its function is as follows. Part of the ABC transporter complex HmuTUV involved in hemin import. Responsible for energy coupling to the transport system. In Shigella dysenteriae, this protein is Hemin import ATP-binding protein HmuV.